A 70-amino-acid chain; its full sequence is Small ribosomal subunit protein bS21 (70 aa).

Belongs to the bacterial ribosomal protein bS21 family.

In Bordetella avium (strain 197N), this protein is Small ribosomal subunit protein bS21.